The following is a 411-amino-acid chain: tRNA (uracil(54)-C(5))-methyltransferase (411 aa).

C62, C68, C71, and C138 together coordinate [4Fe-4S] cluster. S-adenosyl-L-methionine-binding positions include Q254, Y280, T285, D301–S302, D328, and D342. C369 (nucleophile) is an active-site residue. The active-site Proton acceptor is the E402.

It belongs to the class I-like SAM-binding methyltransferase superfamily. RNA M5U methyltransferase family.

The enzyme catalyses uridine(54) in tRNA + S-adenosyl-L-methionine = 5-methyluridine(54) in tRNA + S-adenosyl-L-homocysteine + H(+). In terms of biological role, catalyzes the formation of 5-methyl-uridine at position 54 (m5U54) in tRNA. The chain is tRNA (uracil(54)-C(5))-methyltransferase from Pyrococcus furiosus (strain ATCC 43587 / DSM 3638 / JCM 8422 / Vc1).